The following is a 203-amino-acid chain: Small ribosomal subunit protein uS7B (203 aa).

It belongs to the universal ribosomal protein uS7 family. As to quaternary structure, component of the small ribosomal subunit (SSU). Mature yeast ribosomes consist of a small (40S) and a large (60S) subunit. The 40S small subunit contains 1 molecule of ribosomal RNA (18S rRNA) and at least 33 different proteins. The large 60S subunit contains 3 rRNA molecules (25S, 5.8S and 5S rRNA) and at least 46 different proteins.

Its subcellular location is the cytoplasm. In terms of biological role, component of the ribosome, a large ribonucleoprotein complex responsible for the synthesis of proteins in the cell. The small ribosomal subunit (SSU) binds messenger RNAs (mRNAs) and translates the encoded message by selecting cognate aminoacyl-transfer RNA (tRNA) molecules. The large subunit (LSU) contains the ribosomal catalytic site termed the peptidyl transferase center (PTC), which catalyzes the formation of peptide bonds, thereby polymerizing the amino acids delivered by tRNAs into a polypeptide chain. The nascent polypeptides leave the ribosome through a tunnel in the LSU and interact with protein factors that function in enzymatic processing, targeting, and the membrane insertion of nascent chains at the exit of the ribosomal tunnel. This chain is Small ribosomal subunit protein uS7B (rps502), found in Schizosaccharomyces pombe (strain 972 / ATCC 24843) (Fission yeast).